Reading from the N-terminus, the 615-residue chain is Elongation factor 4 (615 aa).

The 187-residue stretch at 14 to 200 folds into the tr-type G domain; sequence ARIRNFCIIA…KVVELIPAPT (187 aa). GTP-binding positions include 26 to 31 and 147 to 150; these read DHGKST and NKID.

The protein belongs to the TRAFAC class translation factor GTPase superfamily. Classic translation factor GTPase family. LepA subfamily.

Its subcellular location is the cell membrane. It carries out the reaction GTP + H2O = GDP + phosphate + H(+). Required for accurate and efficient protein synthesis under certain stress conditions. May act as a fidelity factor of the translation reaction, by catalyzing a one-codon backward translocation of tRNAs on improperly translocated ribosomes. Back-translocation proceeds from a post-translocation (POST) complex to a pre-translocation (PRE) complex, thus giving elongation factor G a second chance to translocate the tRNAs correctly. Binds to ribosomes in a GTP-dependent manner. The chain is Elongation factor 4 from Corynebacterium glutamicum (strain ATCC 13032 / DSM 20300 / JCM 1318 / BCRC 11384 / CCUG 27702 / LMG 3730 / NBRC 12168 / NCIMB 10025 / NRRL B-2784 / 534).